Here is a 124-residue protein sequence, read N- to C-terminus: Max-like protein 1 (124 aa).

The segment covering 1 to 10 has biased composition (acidic residues); that stretch reads MSDMSDLEDD. The segment at 1–44 is disordered; the sequence is MSDMSDLEDDQTGHCGSGEHSGPFDPKRHAREQHNALERRRRDN. The basic motif stretch occupies residues 29-42; that stretch reads HAREQHNALERRRR. A bHLH domain is found at 29 to 82; sequence HAREQHNALERRRRDNIKDMYTSLREVVPDANGERVQASRAVILKKAIESIEKG. The segment covering 32–44 has biased composition (basic and acidic residues); that stretch reads EQHNALERRRRDN. The helix-loop-helix motif stretch occupies residues 43–82; that stretch reads DNIKDMYTSLREVVPDANGERVQASRAVILKKAIESIEKG. A coiled-coil region spans residues 86–113; it reads SATLSVDVAEQESKNAKLREEIARLKAK.

This sequence belongs to the MAX family. In terms of assembly, heterodimer with mdl-1 in presence and absence of DNA. Interacts with tdpt-1; the interaction promotes axon regeneration after injury. As to expression, expressed in D-type motor neurons.

It localises to the nucleus. Functionally, transcriptional regulator which binds to the E box motif 5'-CACGTG-3', when in a heterodimeric complex with mdl-1. Involved in the control of lifespan in response to dietary restriction, the decline in protein homeostasis associated with normal aging and may overlap with the insulin-like signaling pathway. Involved in promoting infection by the microsporidian pathogen N.parisii. Required for the expression of svh-2 and the promotion of axon regeneration after injury. The polypeptide is Max-like protein 1 (Caenorhabditis elegans).